The primary structure comprises 337 residues: MSEIHLNKAAYIHNLTKICDKAGGKENVIVVLKDNAYGHGARLIASEAKKFGIKNCAVKSECEANEIADIFENILILSHVPTGDESAKFTYAINDIDALLKIKENTKINLAIDTGMHRNGLDISELDYAFEILARRNLELLGAYTHFRASDELNADYFVQRENFSAAKAKILALCDEFGIKKPIFHSHNSAALERASEIKDEMVRVGIAQYGYAQFNGSLNLKPVLSLWAKRVSRRVLKSGQSVGYGAKFIAKDDINVATYDLGYGDGLLRYNGLGELRLANGELILGKISMDSFSCKDSGEWVCVFEDANVWAEFFGTINYDILVKLSPNITRKFI.

The active-site Proton acceptor; specific for D-alanine is K33. K33 is modified (N6-(pyridoxal phosphate)lysine). A substrate-binding site is contributed by R118. Y246 functions as the Proton acceptor; specific for L-alanine in the catalytic mechanism. Residue M292 participates in substrate binding.

The protein belongs to the alanine racemase family. It depends on pyridoxal 5'-phosphate as a cofactor.

It catalyses the reaction L-alanine = D-alanine. Its pathway is amino-acid biosynthesis; D-alanine biosynthesis; D-alanine from L-alanine: step 1/1. Catalyzes the interconversion of L-alanine and D-alanine. May also act on other amino acids. In Campylobacter concisus (strain 13826), this protein is Alanine racemase (alr).